The sequence spans 1456 residues: ABC transporter G family member 44 (1456 aa).

The ABC transporter 1 domain occupies 169 to 442 (ANLLHVVPNK…FESMGFKCPD (274 aa)). ATP is bound at residue 202-209 (GPPGSGKT). The ABC transmembrane type-2 1 domain maps to 520 to 733 (ELLRTCIARE…AMNAIAVNEF (214 aa)). The next 6 helical transmembrane spans lie at 538-558 (FVYR…MTLF), 571-591 (GIVY…NGFS), 626-646 (IPIS…VIGF), 658-678 (LLLL…AALG), 682-702 (VVAN…SGFI), and 768-788 (IGVG…TIAL). The tract at residues 812-844 (NITGETINDPRNSASSGQTTNTRRNAAPGEASE) is disordered. Polar residues predominate over residues 814–835 (TGETINDPRNSASSGQTTNTRR). An ABC transporter 2 domain is found at 858–1110 (VAFNNIRYSV…DLIEYFEGVE (253 aa)). Residue 903–910 (GVSGAGKT) coordinates ATP. One can recognise an ABC transmembrane type-2 2 domain in the interval 1183–1397 (TQCMACLWKQ…TLYGLVASQF (215 aa)). Helical transmembrane passes span 1202–1222 (YTVV…TIFW), 1242–1262 (YAAV…VVAV), 1290–1310 (LPYV…MIGF), 1317–1337 (FFWY…YGML), 1347–1367 (IASI…GFVI), 1378–1398 (WYSW…SQFG), and 1425–1445 (FLGV…VSFS).

It belongs to the ABC transporter superfamily. ABCG family. PDR (TC 3.A.1.205) subfamily.

The protein localises to the membrane. In terms of biological role, may be a general defense protein. The sequence is that of ABC transporter G family member 44 from Oryza sativa subsp. japonica (Rice).